The primary structure comprises 356 residues: Syntaxin-7A (356 aa).

The Cytoplasmic portion of the chain corresponds to 1–333 (MYNNNNNFGG…NQKSSRNKMC (333 aa)). Low complexity-rich tracts occupy residues 32 to 74 (NNNN…FDNN) and 207 to 224 (NNNS…NNQQ). 2 disordered regions span residues 32–88 (NNNN…NSDY) and 187–247 (EKTT…RRQQ). Over residues 233–244 (EDEHQSLMESSR) the composition is skewed to basic and acidic residues. Residues 259–321 (NSIIQERDEG…KEGVNHLREA (63 aa)) enclose the t-SNARE coiled-coil homology domain. The chain crosses the membrane as a helical; Anchor for type IV membrane protein span at residues 334–354 (WIVLILLIVCAVLGVILFFTL). Over 355–356 (RK) the chain is Vesicular.

It belongs to the syntaxin family. In terms of assembly, component of the SNARE complex composed of syn7A, syn8A, vamp7A and vti1A. Interacts with nsfA, snpA and snpC.

It localises to the endosome membrane. In terms of biological role, involved in the targeting and/or fusion of transport vesicles to their target membrane during transport of proteins from the early endosome to the lysosome. Required for fusion of late endosomes with lysosomes and homotypic lysosomal fusion. May be involved in protein trafficking from the plasma membrane to the early endosome (EE) as well as in homotypic fusion of endocytic organelles. The protein is Syntaxin-7A of Dictyostelium discoideum (Social amoeba).